Reading from the N-terminus, the 360-residue chain is Nucleoporin SEH1 (360 aa).

6 WD repeats span residues 10–49 (DHKD…DWHC), 55–96 (THSG…SNDK), 111–152 (DSRT…NLSQ), 160–210 (SCKL…RKYA), 217–258 (TVTD…KELT), and 276–315 (NHNS…NWKC). Lys-12 participates in a covalent cross-link: Glycyl lysine isopeptide (Lys-Gly) (interchain with G-Cter in SUMO2). Ser-179 and Ser-190 each carry phosphoserine. Residues 324-354 (SPVNGSSQQGTSNPSLGSTIPSLQNSLNGSS) are compositionally biased toward polar residues. The interval 324–360 (SPVNGSSQQGTSNPSLGSTIPSLQNSLNGSSAGRKHS) is disordered.

The protein belongs to the WD repeat SEC13 family. As to quaternary structure, component of the Nup107-160 subcomplex of the nuclear pore complex (NPC). The Nup107-160 subcomplex includes NUP160, NUP133, NUP107, NUP98, NUP85, NUP43, NUP37, SEH1 and SEC13. The SEH1 subunit appears to be only weakly associated with the Nup107-160 subcomplex. Component of the GATOR2 subcomplex, composed of MIOS, SEC13, SEH1L, WDR24 and WDR59. The GATOR2 complex interacts with CASTOR1 and CASTOR2; the interaction is negatively regulated by arginine. The GATOR2 complex interacts with SESN1, SESN2 and SESN3; the interaction is negatively regulated by amino acids. SESN1, SESN2 and SESN3 convey leucine availability via direct interaction with SEH1L and WDR24.

Its subcellular location is the chromosome. The protein resides in the centromere. It is found in the kinetochore. The protein localises to the nucleus. It localises to the nuclear pore complex. Its subcellular location is the lysosome membrane. Its activity is regulated as follows. The GATOR2 complex is negatively regulated by the upstream amino acid sensors CASTOR1 and SESN2, which sequester the GATOR2 complex in absence of amino acids. In the presence of abundant amino acids, GATOR2 is released from CASTOR1 and SESN2 and activated. Its function is as follows. Component of the Nup107-160 subcomplex of the nuclear pore complex (NPC). The Nup107-160 subcomplex is required for the assembly of a functional NPC. The Nup107-160 subcomplex is also required for normal kinetochore microtubule attachment, mitotic progression and chromosome segregation. This subunit plays a role in recruitment of the Nup107-160 subcomplex to the kinetochore. Functionally, as a component of the GATOR2 complex, functions as an activator of the amino acid-sensing branch of the mTORC1 signaling pathway. The GATOR2 complex indirectly activates mTORC1 through the inhibition of the GATOR1 subcomplex. GATOR2 probably acts as an E3 ubiquitin-protein ligase toward GATOR1. In the presence of abundant amino acids, the GATOR2 complex mediates ubiquitination of the NPRL2 core component of the GATOR1 complex, leading to GATOR1 inactivation. In the absence of amino acids, GATOR2 is inhibited, activating the GATOR1 complex. Within the GATOR2 complex, SEC13 and SEH1L are required to stabilize the complex. The protein is Nucleoporin SEH1 (SEH1L) of Homo sapiens (Human).